A 386-amino-acid chain; its full sequence is Patatin-14 (386 aa).

The first 23 residues, 1–23 (MATTKSFLILFFMILATTSSTCA), serve as a signal peptide directing secretion. The region spanning 32 to 229 (LSIDGGGIKG…TVGDPALLSL (198 aa)) is the PNPLA domain. Positions 36–41 (GGGIKG) match the GXGXXG motif. The short motif at 75–79 (GTSTG) is the GXSXG element. Serine 77 (nucleophile) is an active-site residue. Asparagine 115 is a glycosylation site (N-linked (GlcNAc...) asparagine). The Proton acceptor role is filled by aspartate 215. A DGA/G motif is present at residues 215–217 (DGG). Residues 321-381 (ENALTGTTTE…LLSDRKKLRA (61 aa)) are a coiled coil.

It belongs to the patatin family. As to expression, tuber.

Its subcellular location is the vacuole. In terms of biological role, probable lipolytic acyl hydrolase (LAH), an activity which is thought to be involved in the response of tubers to pathogens. The protein is Patatin-14 of Solanum tuberosum (Potato).